The chain runs to 92 residues: Defensin Lucifensin (92 aa).

An N-terminal signal peptide occupies residues 1–23 (MKFFMVFAVTFCLALSFVSQSLA). Residues 24–52 (LPADDEAHFVDGLEALKTIEPELHGRYKR) constitute a propeptide that is removed on maturation. 3 cysteine pairs are disulfide-bonded: cysteine 55–cysteine 82, cysteine 68–cysteine 88, and cysteine 72–cysteine 90.

Belongs to the invertebrate defensin family. Type 1 subfamily. In terms of processing, the disulfide bonds are essential for antimicrobial activity. In terms of tissue distribution, larval fat body, hemolymph and salivary glands (at protein level). Expressed in the salivary glands of all larval stages.

It is found in the secreted. It localises to the host cell membrane. Functionally, shows strong antibacterial activity against numerous Gram-positive bacteria. It selectively inhibits peptidoglycan biosynthesis through complex formation with the cell wall precursor lipid II (1:1 molar ratio) thus inhibiting cell wall synthesis. Shows antibacterial activity against the Gram-positive bacteria M.luteus, E.fecalis (MIC=32 mg/L), S.aureus (MIC=16 mg/L), S.carnosus (MIC=2 mg/L), S.pneumoniae (MIC=2 mg/L) and S.pyogenes (MIC=2 mg/L) and against a number of methicillin-resistant S.aureus and glycopeptide-intermediate S.aureus isolates. Does not show antibacterial activity against Gram-negative bacteria or antifungal activity against C.utilis. Shows slight antifungal activity against C.albicans. This chain is Defensin Lucifensin, found in Lucilia sericata (Green bottle fly).